The following is a 155-amino-acid chain: Ribosome maturation factor RimP (155 aa).

The protein belongs to the RimP family.

The protein localises to the cytoplasm. In terms of biological role, required for maturation of 30S ribosomal subunits. This is Ribosome maturation factor RimP from Synechococcus sp. (strain CC9902).